The following is a 556-amino-acid chain: U-box domain-containing protein 38 (556 aa).

The segment at 1-34 (MGKNGRLRWNPFSHRSSSSTSSSSRQQQQEQQPP) is disordered. Positions 13-32 (SHRSSSSTSSSSRQQQQEQQ) are enriched in low complexity. One can recognise a U-box domain in the interval 32 to 108 (QPPVEFLCPI…DTWCDTVGVS (77 aa)). ARM repeat units follow at residues 256–295 (DEAR…NLSL), 297–336 (KKNK…SLSL), 338–378 (DDNK…HLTL), 380–417 (QTNR…NLAC), and 418–468 (CSEG…ALSH).

As to quaternary structure, binds to SD16, SD17, SD18 and SD129.

It carries out the reaction S-ubiquitinyl-[E2 ubiquitin-conjugating enzyme]-L-cysteine + [acceptor protein]-L-lysine = [E2 ubiquitin-conjugating enzyme]-L-cysteine + N(6)-ubiquitinyl-[acceptor protein]-L-lysine.. Its pathway is protein modification; protein ubiquitination. In terms of biological role, functions as an E3 ubiquitin ligase. In Arabidopsis thaliana (Mouse-ear cress), this protein is U-box domain-containing protein 38 (PUB38).